The sequence spans 612 residues: 1,8-cineole synthase, chloroplastic (612 aa).

The N-terminal 52 residues, 1-52 (MALVSGAPLASRSCLNKSLISSTHELKPLRRTILPTLRWKSATPSINMCLTT), are a transit peptide targeting the chloroplast. 3 residues coordinate Mg(2+): D363, D367, and D515. A DDXXD motif motif is present at residues 363–367 (DDIYD).

The protein belongs to the terpene synthase family. Tpsd subfamily. Mg(2+) serves as cofactor. Requires Mn(2+) as cofactor.

It localises to the plastid. Its subcellular location is the chloroplast. The enzyme catalyses (2E)-geranyl diphosphate + H2O = 1,8-cineole + diphosphate. The protein operates within terpene metabolism; oleoresin biosynthesis. Its function is as follows. Terpene synthase (TPS) involved in the biosynthesis of monoterpene natural products included in conifer oleoresin secretions and volatile emissions; these compounds contribute to biotic and abiotic stress defense against herbivores and pathogens. Catalyzes the conversion of (2E)-geranyl diphosphate (GPP) to 1,8-cineole. The protein is 1,8-cineole synthase, chloroplastic of Picea engelmannii x Picea glauca (Hybrid white spruce).